Here is a 734-residue protein sequence, read N- to C-terminus: MATKFPKFSQALAQDPATRRIWYGLATAHDFESHDGMTEENLYQKIFASHFGHLAIIFLWTSGNLFHVAWQGNFEQWVLNPLKVKPIAHAIWDPHFGQPAVKAFTKGGVSYPVNIATSGVYHWWYTIGMRTNNDLYSGSIFLLILASVMLFAGWLHLQPKFRPGLAWFKNNESRLNHHLSGLFGFSSVAWSGHLIHVAIPESRGLHVGWDNFTKVYPHPEGLKAFFTGNWSNYAANPDTADHIFGTTEGSGTAILTFLGGFHPQTQSLWLTDIAHHHLAIGVIFIFAGHMYRTNWGIGHSLKEILDAHRAPSGRLGNGHKGLFETISNSLHFQLGLALASLGVITSLVAQHMYALPSYAFIAKDYVTQAALYTHHQYIAGFLMVGAFAHGAIFFVRDYDPEQNKNNVLARMLEHKEAIISHLSWVSLFLGFHTLGLYVHNDVVVAFGTPEKQILVEPVFAQWIQASSGKAMYGFDVLLSANTSIAKNASSNIWLPGWLEAINSGKNSLFLPIGPGDFLVHHAIALALHTTTLILVKGALDARGSKLMPDKKDFGYSFPCDGPGRGGTCDISAWDAFYLSMFWMLNTIGWVTFYWHWKHVTIWQGNAGQFNESSTYIMGWLRDYLWLNSSPLINGYNPFGMNSLSVWAWMFLFGHLIWATGFMFLISWRGYWQELIETLVWAHERTPLANLVRWRDKPVALSIVQARLVGLVHFTVGYIFTYAAFVIASTAGKFG.

The next 8 helical transmembrane spans lie at 46–69 (IFASHFGHLAIIFLWTSGNLFHVA), 135–158 (LYSGSIFLLILASVMLFAGWLHLQ), 175–199 (LNHHLSGLFGFSSVAWSGHLIHVAI), 273–291 (IAHHHLAIGVIFIFAGHMY), 330–353 (LHFQLGLALASLGVITSLVAQHMY), 369–395 (AALYTHHQYIAGFLMVGAFAHGAIFFV), 417–439 (AIISHLSWVSLFLGFHTLGLYVH), and 517–535 (FLVHHAIALALHTTTLILV). [4Fe-4S] cluster-binding residues include cysteine 559 and cysteine 568. Transmembrane regions (helical) follow at residues 575–596 (AFYLSMFWMLNTIGWVTFYWHW) and 643–665 (LSVWAWMFLFGHLIWATGFMFLI). Residues histidine 654, methionine 662, and tyrosine 670 each contribute to the chlorophyll a site. Tryptophan 671 lines the phylloquinone pocket. The helical transmembrane segment at 707–727 (LVGLVHFTVGYIFTYAAFVIA) threads the bilayer.

This sequence belongs to the PsaA/PsaB family. In terms of assembly, the PsaA/B heterodimer binds the P700 chlorophyll special pair and subsequent electron acceptors. PSI consists of a core antenna complex that captures photons, and an electron transfer chain that converts photonic excitation into a charge separation. The eukaryotic PSI reaction center is composed of at least 11 subunits. P700 is a chlorophyll a/chlorophyll a' dimer, A0 is one or more chlorophyll a, A1 is one or both phylloquinones and FX is a shared 4Fe-4S iron-sulfur center. is required as a cofactor.

Its subcellular location is the plastid. The protein localises to the chloroplast thylakoid membrane. It catalyses the reaction reduced [plastocyanin] + hnu + oxidized [2Fe-2S]-[ferredoxin] = oxidized [plastocyanin] + reduced [2Fe-2S]-[ferredoxin]. Functionally, psaA and PsaB bind P700, the primary electron donor of photosystem I (PSI), as well as the electron acceptors A0, A1 and FX. PSI is a plastocyanin/cytochrome c6-ferredoxin oxidoreductase, converting photonic excitation into a charge separation, which transfers an electron from the donor P700 chlorophyll pair to the spectroscopically characterized acceptors A0, A1, FX, FA and FB in turn. Oxidized P700 is reduced on the lumenal side of the thylakoid membrane by plastocyanin or cytochrome c6. In Guillardia theta (Cryptophyte), this protein is Photosystem I P700 chlorophyll a apoprotein A2.